Reading from the N-terminus, the 467-residue chain is tRNA-2-methylthio-N(6)-dimethylallyladenosine synthase (467 aa).

The MTTase N-terminal domain maps to Arg4 to Arg124. [4Fe-4S] cluster contacts are provided by Cys13, Cys49, Cys87, Cys161, Cys165, and Cys168. The Radical SAM core domain occupies Gln147 to Ala379. The TRAM domain occupies Gln382 to Glu444.

Belongs to the methylthiotransferase family. MiaB subfamily. In terms of assembly, monomer. [4Fe-4S] cluster is required as a cofactor.

It is found in the cytoplasm. It carries out the reaction N(6)-dimethylallyladenosine(37) in tRNA + (sulfur carrier)-SH + AH2 + 2 S-adenosyl-L-methionine = 2-methylsulfanyl-N(6)-dimethylallyladenosine(37) in tRNA + (sulfur carrier)-H + 5'-deoxyadenosine + L-methionine + A + S-adenosyl-L-homocysteine + 2 H(+). Functionally, catalyzes the methylthiolation of N6-(dimethylallyl)adenosine (i(6)A), leading to the formation of 2-methylthio-N6-(dimethylallyl)adenosine (ms(2)i(6)A) at position 37 in tRNAs that read codons beginning with uridine. The protein is tRNA-2-methylthio-N(6)-dimethylallyladenosine synthase of Rhodospirillum rubrum (strain ATCC 11170 / ATH 1.1.1 / DSM 467 / LMG 4362 / NCIMB 8255 / S1).